We begin with the raw amino-acid sequence, 200 residues long: Neutrophil gelatinase-associated lipocalin (200 aa).

The N-terminal stretch at 1–20 is a signal peptide; that stretch reads MALSVMCLGLALLGVLQSQA. Residue Gln-21 is modified to Pyrrolidone carboxylic acid. 72 to 74 contacts a carboxymycobactin; the sequence is YST. Asn-81 and Asn-85 each carry an N-linked (GlcNAc...) asparagine glycan. Cys-98 and Cys-197 are oxidised to a cystine. Tyr-128 is a binding site for enterobactin. Lys-147, Lys-156, and Tyr-160 together coordinate a carboxymycobactin. Lys-156 is a binding site for enterobactin.

Belongs to the calycin superfamily. Lipocalin family. In terms of assembly, monomer. Homodimer; disulfide-linked. Heterodimer; disulfide-linked with MMP9. N-glycosylated. Expressed in the cortical tubules of the kidney (at protein level). Also expressed in the medullary tubules of the kidney. Detected in lung, spleen, uterus, vagina and epididymis.

The protein resides in the secreted. It localises to the cytoplasmic granule lumen. The protein localises to the cytoplasmic vesicle lumen. In terms of biological role, iron-trafficking protein involved in multiple processes such as apoptosis, innate immunity and renal development. Binds iron through association with 2,3-dihydroxybenzoic acid (2,3-DHBA), a siderophore that shares structural similarities with bacterial enterobactin, and delivers or removes iron from the cell, depending on the context. Iron-bound form (holo-24p3) is internalized following binding to the SLC22A17 (24p3R) receptor, leading to release of iron and subsequent increase of intracellular iron concentration. In contrast, association of the iron-free form (apo-24p3) with the SLC22A17 (24p3R) receptor is followed by association with an intracellular siderophore, iron chelation and iron transfer to the extracellular medium, thereby reducing intracellular iron concentration. Involved in apoptosis due to interleukin-3 (IL3) deprivation: iron-loaded form increases intracellular iron concentration without promoting apoptosis, while iron-free form decreases intracellular iron levels, inducing expression of the proapoptotic protein BCL2L11/BIM, resulting in apoptosis. Involved in innate immunity; limits bacterial proliferation by sequestering iron bound to microbial siderophores, such as enterobactin. Can also bind siderophores from M.tuberculosis. This Mus musculus (Mouse) protein is Neutrophil gelatinase-associated lipocalin (Lcn2).